Reading from the N-terminus, the 133-residue chain is Small heat shock protein ibp (133 aa).

In terms of domain architecture, sHSP spans 11 to 126 (EQPLSENPNY…KPKKISINEE (116 aa)).

It belongs to the small heat shock protein (HSP20) family.

The protein is Small heat shock protein ibp (ibp) of Wigglesworthia glossinidia brevipalpis.